A 130-amino-acid polypeptide reads, in one-letter code: MAQVQYYGTGRRKHSVARVRLVPGEGRIVINKREMDTYFGLETLKLIVKQPLVLTETLGRYDVLVNVNGGGTTGQAGAIRHGVARALLKADPELRGALKRAGFLTRDPRMKERKKYGLKAARRAPQFSKR.

Belongs to the universal ribosomal protein uS9 family.

This is Small ribosomal subunit protein uS9 from Brevibacillus brevis (strain 47 / JCM 6285 / NBRC 100599).